Here is a 423-residue protein sequence, read N- to C-terminus: 26S proteasome regulatory subunit 6A homolog (423 aa).

211–218 (GPPGTGKT) serves as a coordination point for ATP.

Belongs to the AAA ATPase family.

The protein localises to the cytoplasm. The protein resides in the nucleus. In terms of biological role, the 26S proteasome is involved in the ATP-dependent degradation of ubiquitinated proteins. The regulatory (or ATPase) complex confers ATP dependency and substrate specificity to the 26S complex. This is 26S proteasome regulatory subunit 6A homolog (TBP1) from Solanum lycopersicum (Tomato).